The primary structure comprises 57 residues: Potassium channel toxin gamma-KTx 2.1 (57 aa).

The first 21 residues, 1-21 (MKISFVLLLTLFICSIGWSEA), serve as a signal peptide directing secretion. 3 cysteine pairs are disulfide-bonded: Cys28–Cys49, Cys34–Cys54, and Cys38–Cys56.

The protein belongs to the short scorpion toxin superfamily. Potassium channel inhibitor family. Gamma-KTx 2 subfamily. Expressed by the venom gland.

The protein resides in the secreted. Blocks human and/or rat Kv11.1/KCNH2/ERG1, Kv11.2/KCNH6/ERG2 and Kv11.3/KCNH7/ERG3 by binding to channel outer vestibule (S5P domain) with a 1:1 stoichiometry. Inhibition data are the following: hERG1 (reversible, Kd=7.7 nM, IC(50)=3.3 nM, IC(50)=11.9 nM), rERG1 (reversible, Kd=19 nM), hERG2 (reversible, Kd=77 nM), rERG2 (irreversible, Kd=4.2 nM), hERG3 (reversible, Kd=11.5 nM) and rERG3 (reversible, Kd=747 nM) potassium channels. Also has a minimal effect on rat ELK1/KCNH4 potassium channels (9% inhibition at 100 nM). Both this toxin and CnErgTx1 (AC Q86QT3) share mechanism of action and have overlapping binding sites on ERG1. The potency of these two toxins is not affected by elevating potassium ion concentration from 2 to 98 mM. In addition, at high toxin concentrations, block of ERG1 macroscopic currents by these two toxins is incomplete (88%). The blockade by this toxin is preferentially closed channel state-dependent, with a component of open, but not inactive state-dependent blockade. This toxin produces a concentration-dependent prolongation of QTc in the isolated rabbit heart (16.3% at 100 nM). The sequence is that of Potassium channel toxin gamma-KTx 2.1 from Mesobuthus eupeus (Lesser Asian scorpion).